The primary structure comprises 376 residues: Thymidine kinase (376 aa).

Positions 1–47 (MASHAGQQHAPAFGQAARASGPTDGRAASRPSHRQGASEARGDPELP) are disordered. An ATP-binding site is contributed by 56 to 63 (GPHGVGKT). E84 serves as the catalytic Proton acceptor. The substrate site is built by Y102 and Q126. R217 is a binding site for ATP. R223 lines the substrate pocket.

Belongs to the herpesviridae thymidine kinase family. As to quaternary structure, homodimer.

The enzyme catalyses thymidine + ATP = dTMP + ADP + H(+). Catalyzes the transfer of the gamma-phospho group of ATP to thymidine to generate dTMP in the salvage pathway of pyrimidine synthesis. The dTMP serves as a substrate for DNA polymerase during viral DNA replication. Allows the virus to be reactivated and to grow in non-proliferative cells lacking a high concentration of phosphorylated nucleic acid precursors. The polypeptide is Thymidine kinase (Human herpesvirus 2 (strain 333) (HHV-2)).